The following is a 265-amino-acid chain: Protein Exd1 homolog (265 aa).

Residues Glu32 to Ala82 form the 3'-5' exonuclease domain.

This sequence belongs to the EXD1 family. In terms of assembly, homodimer.

RNA-binding protein. Inactive exonuclease. The protein is Protein Exd1 homolog of Drosophila melanogaster (Fruit fly).